A 441-amino-acid chain; its full sequence is N-acetylmuramyl-L-alanine amidase (441 aa).

The first 25 residues, 1-25 (MKTKTLFIFSAILTLSIFAPNETFA), serve as a signal peptide directing secretion.

This sequence belongs to the peptidase S12 family.

The catalysed reaction is Hydrolyzes the link between N-acetylmuramoyl residues and L-amino acid residues in certain cell-wall glycopeptides.. It participates in cell wall biogenesis; peptidoglycan recycling. In terms of biological role, involved in muropeptide recycling. Hydrolyzes the amide bond between N-acetylmuramic acid (MurNAc) and the L-alanine residue of the stem peptide. Cannot hydrolyze muropeptides containing N-acetylglucosamine (GlcNAc) at the non-reducing end. This Bacillus subtilis (strain 168) protein is N-acetylmuramyl-L-alanine amidase.